Consider the following 247-residue polypeptide: DNA polymerase sliding clamp 1 (247 aa).

This sequence belongs to the PCNA family. In terms of assembly, heterotrimer. The subunits circularize to form a toroid; DNA passes through its center. Replication factor C (RFC) is required to load the toroid on the DNA.

Functionally, sliding clamp subunit that acts as a moving platform for DNA processing. Responsible for tethering the catalytic subunit of DNA polymerase and other proteins to DNA during high-speed replication. The chain is DNA polymerase sliding clamp 1 from Aeropyrum pernix (strain ATCC 700893 / DSM 11879 / JCM 9820 / NBRC 100138 / K1).